The chain runs to 952 residues: Meiotic coiled-coil protein 3 (952 aa).

Coiled coils occupy residues 283 to 611 (QLLQ…KEHL), 684 to 716 (TKKF…EDKL), and 839 to 942 (SLEN…RERE).

Its subcellular location is the cytoplasm. Has a role in meiosis. The polypeptide is Meiotic coiled-coil protein 3 (mcp3) (Schizosaccharomyces pombe (strain 972 / ATCC 24843) (Fission yeast)).